Here is an 83-residue protein sequence, read N- to C-terminus: Apolipoprotein C-I, acidic form (83 aa).

A signal peptide spans 1–26 (MRLFLSLPVLVVVLSIVLEGPAPAQG).

This sequence belongs to the apolipoprotein C1 family.

It localises to the secreted. The polypeptide is Apolipoprotein C-I, acidic form (APOC1A) (Pan paniscus (Pygmy chimpanzee)).